Here is a 61-residue protein sequence, read N- to C-terminus: Metallothionein-1C (61 aa).

Residues 1 to 29 (MDPNCSCSTGGSCSCAGSCTCKACRCTSC) are beta. A divalent metal cation contacts are provided by C5, C7, C13, C15, C19, C21, C24, C26, C29, C33, C34, C36, C37, C41, C44, C48, C50, C57, C59, and C60. An alpha region spans residues 30 to 61 (KKSCCSCCPAGCARCAQGCICKGASDKCSCCA).

The protein belongs to the metallothionein superfamily. Type 1 family. As to quaternary structure, monomer.

Metallothioneins have a high content of cysteine residues that bind various heavy metals; these proteins are transcriptionally regulated by both heavy metals and glucocorticoids. The sequence is that of Metallothionein-1C (MT1C) from Sus scrofa (Pig).